We begin with the raw amino-acid sequence, 493 residues long: CBL-interacting protein kinase 26 (493 aa).

A Protein kinase domain is found at 12–266 (YEIGRQLGQG…IPKIKRSAWY (255 aa)). ATP is bound by residues 18 to 26 (LGQGNFAKV) and K41. The active-site Proton acceptor is D134. An activation loop region spans residues 152 to 181 (DFGLSALSESKRHDGLLHTTCGTPAYVAPE). The segment at 311-332 (KVYTNGEATTSDSPECSNSDGK) is disordered. Residues 316–332 (GEATTSDSPECSNSDGK) show a composition bias toward polar residues. Positions 320–360 (TSDSPECSNSDGKQASLSLPNLNAFDIISLSTGFDLSNLFE) constitute an NAF domain. The PPI stretch occupies residues 365 to 394 (RREERFTTRQPAAAIFAKLNELARRFKLKI). Positions 465 to 493 (GQHQQPEQSMQGMQGEQQPSRLPSQQPQG) are disordered.

Belongs to the protein kinase superfamily. CAMK Ser/Thr protein kinase family. SNF1 subfamily. Mn(2+) is required as a cofactor.

It carries out the reaction L-seryl-[protein] + ATP = O-phospho-L-seryl-[protein] + ADP + H(+). The catalysed reaction is L-threonyl-[protein] + ATP = O-phospho-L-threonyl-[protein] + ADP + H(+). CIPK serine-threonine protein kinases interact with CBL proteins. Binding of a CBL protein to the regulatory NAF domain of CIPK protein lead to the activation of the kinase in a calcium-dependent manner. This Oryza sativa subsp. japonica (Rice) protein is CBL-interacting protein kinase 26 (CIPK26).